We begin with the raw amino-acid sequence, 283 residues long: uncharacterized protein (283 aa).

Aspartate 121 is a catalytic residue.

This sequence belongs to the pseudouridine synthase RluA family.

It carries out the reaction a uridine in RNA = a pseudouridine in RNA. This is an uncharacterized protein from Bacillus subtilis (strain 168).